The primary structure comprises 290 residues: HTH-type transcriptional activator RhaR (290 aa).

One can recognise an HTH araC/xylS-type domain in the interval 179–277; that stretch reads DLIMSALQQS…GMTPRDYRQR (99 aa). 2 DNA-binding regions (H-T-H motif) span residues 196–217 and 244–267; these read ADFCHKNQLVERSLKQLFRQQT and ISDIAARCGFEDSNYFSAVFTREA.

Binds DNA as a dimer.

The protein localises to the cytoplasm. Activates expression of the rhaSR operon in response to L-rhamnose. The polypeptide is HTH-type transcriptional activator RhaR (Yersinia pestis bv. Antiqua (strain Antiqua)).